We begin with the raw amino-acid sequence, 413 residues long: Histidinol-phosphate aminotransferase, chloroplastic (413 aa).

A chloroplast-targeting transit peptide spans 1 to 35 (MGVIELCNTSSICIGRAKPSCCSIERNQRRRIICM). N6-(pyridoxal phosphate)lysine is present on K273.

This sequence belongs to the class-II pyridoxal-phosphate-dependent aminotransferase family. Histidinol-phosphate aminotransferase subfamily. In terms of assembly, homodimer. Pyridoxal 5'-phosphate serves as cofactor. In terms of tissue distribution, mainly expressed in green tissues.

It is found in the plastid. The protein localises to the chloroplast. The enzyme catalyses L-histidinol phosphate + 2-oxoglutarate = 3-(imidazol-4-yl)-2-oxopropyl phosphate + L-glutamate. It participates in amino-acid biosynthesis; L-histidine biosynthesis; L-histidine from 5-phospho-alpha-D-ribose 1-diphosphate: step 7/9. In Nicotiana tabacum (Common tobacco), this protein is Histidinol-phosphate aminotransferase, chloroplastic (HPA).